A 332-amino-acid chain; its full sequence is Flotillin-like protein FloA (332 aa).

The next 2 helical transmembrane spans lie at 6 to 26 (LGYL…FSFV) and 28 to 48 (VGLW…YMIG).

The protein belongs to the flotillin-like FloA family. In terms of assembly, homooligomerizes.

It localises to the cell membrane. The protein resides in the membrane raft. Functionally, found in functional membrane microdomains (FMM) that may be equivalent to eukaryotic membrane rafts. FMMs are highly dynamic and increase in number as cells age. Flotillins are thought to be important factors in membrane fluidity. The sequence is that of Flotillin-like protein FloA from Symbiobacterium thermophilum (strain DSM 24528 / JCM 14929 / IAM 14863 / T).